The primary structure comprises 234 residues: Nuclear transcription factor Y subunit B-6 (234 aa).

Disordered stretches follow at residues 1–21 (MERG…TPSP) and 35–55 (MRPP…EECT). A DNA-binding region spans residues 63 to 69 (MPIANVI). Residues 90–101 (IQECVSEYISFI) are subunit association domain (SAD). The interval 206–234 (NEPNSKMSGSSSGASGARVEVFPTQQHKY) is disordered. The span at 213–222 (SGSSSGASGA) shows a compositional bias: low complexity.

This sequence belongs to the NFYB/HAP3 subunit family. Heterotrimeric transcription factor composed of three components, NF-YA, NF-YB and NF-YC. NF-YB and NF-YC must interact and dimerize for NF-YA association and DNA binding. Interacts with PRN1. Binds directly with DPB3-1. In terms of tissue distribution, expressed in roots, flowers and developing siliques. Present in etiolated seedlings.

Its subcellular location is the nucleus. Component of the NF-Y/HAP transcription factor complex. The NF-Y complex stimulates the transcription of various genes by recognizing and binding to a CCAAT motif in promoters. Plays a role in the regulation of the embryogenesis. Involved in the abscisic acid (ABA) signaling pathway. The chain is Nuclear transcription factor Y subunit B-6 from Arabidopsis thaliana (Mouse-ear cress).